We begin with the raw amino-acid sequence, 446 residues long: Ribosomal protein uS12 methylthiotransferase RimO (446 aa).

Residues 4–119 enclose the MTTase N-terminal domain; the sequence is YKVGMVSLGC…IDKVIKEFIE (116 aa). Positions 13, 48, 82, 157, 161, and 164 each coordinate [4Fe-4S] cluster. The region spanning 143-373 is the Radical SAM core domain; that stretch reads TTQKESAYIR…MLSQEKISND (231 aa). In terms of domain architecture, TRAM spans 376–442; that stretch reads KLKVNKKYDI…DYDLIGVVED (67 aa).

The protein belongs to the methylthiotransferase family. RimO subfamily. Requires [4Fe-4S] cluster as cofactor.

It is found in the cytoplasm. The enzyme catalyses L-aspartate(89)-[ribosomal protein uS12]-hydrogen + (sulfur carrier)-SH + AH2 + 2 S-adenosyl-L-methionine = 3-methylsulfanyl-L-aspartate(89)-[ribosomal protein uS12]-hydrogen + (sulfur carrier)-H + 5'-deoxyadenosine + L-methionine + A + S-adenosyl-L-homocysteine + 2 H(+). Functionally, catalyzes the methylthiolation of an aspartic acid residue of ribosomal protein uS12. This Clostridium botulinum (strain Eklund 17B / Type B) protein is Ribosomal protein uS12 methylthiotransferase RimO.